Consider the following 57-residue polypeptide: Ribosome modulation factor 1 (57 aa).

The segment covering 1–14 has biased composition (basic residues); that stretch reads MKRQKRDRQSRAHT. The tract at residues 1–24 is disordered; the sequence is MKRQKRDRQSRAHTRGYQAGISGR.

This sequence belongs to the ribosome modulation factor family.

Its subcellular location is the cytoplasm. In terms of biological role, during stationary phase, converts 70S ribosomes to an inactive dimeric form (100S ribosomes). This is Ribosome modulation factor 1 from Colwellia psychrerythraea (strain 34H / ATCC BAA-681) (Vibrio psychroerythus).